The sequence spans 432 residues: Gamma-glutamyl phosphate reductase (432 aa).

The protein belongs to the gamma-glutamyl phosphate reductase family.

The protein localises to the cytoplasm. It catalyses the reaction L-glutamate 5-semialdehyde + phosphate + NADP(+) = L-glutamyl 5-phosphate + NADPH + H(+). Its pathway is amino-acid biosynthesis; L-proline biosynthesis; L-glutamate 5-semialdehyde from L-glutamate: step 2/2. Functionally, catalyzes the NADPH-dependent reduction of L-glutamate 5-phosphate into L-glutamate 5-semialdehyde and phosphate. The product spontaneously undergoes cyclization to form 1-pyrroline-5-carboxylate. The chain is Gamma-glutamyl phosphate reductase from Kineococcus radiotolerans (strain ATCC BAA-149 / DSM 14245 / SRS30216).